Here is a 618-residue protein sequence, read N- to C-terminus: Serine/threonine-protein kinase TNNI3K (618 aa).

Residue Gly2 is the site of N-myristoyl glycine attachment. Residues 21 to 51 adopt a coiled-coil conformation; sequence SESYVITIERLEDDLKIKEKELTELRNIFGS. 10 ANK repeats span residues 66–96, 100–129, 133–162, 166–195, 199–228, 234–263, 269–298, 304–335, 339–368, and 381–410; these read NGLSLLHLCCICGGNKSHIRTLMLKGLRPSR, NGFTALHLAVYKDNAELITSLLHGGADIQQ, GGLTALHIATIAGHLEAADVLLQHGANVNI, VFFTPLHIAAYYGHEQVTRLLLKFGADVNV, VGDRPLHLASAKGFLNIAKLLMEEGSKADV, EDHVPLHFCSRFGHHDIVKYLLQNDLEVQP, YGDTPLHLACYNGKFEVAKEIIQISGTESL, FSETAFHSACTYGKSIDLVKFLLDQNVININH, DGHTGLHSACYHGHIHLVQFLLDNGADMNL, and DEQTCLMWAYEKGHDAIVTLLKHYKRPQDE. A Protein kinase domain is found at 463–618; it reads IEFHEIIGSG…TAHTIYLLAP (156 aa). Residues 469–477 and Lys490 each bind ATP; that span reads IGSGSFGKV. The Proton acceptor role is filled by Asp588.

Belongs to the protein kinase superfamily. TKL Ser/Thr protein kinase family. MAP kinase kinase kinase subfamily. Interacts with TNNI3, ACTC, ACTA1, MYBPC3, AIP, FABP3 and HADHB. Requires Mg(2+) as cofactor. Post-translationally, autophosphorylated.

The protein resides in the nucleus. Its subcellular location is the cytoplasm. It catalyses the reaction L-seryl-[protein] + ATP = O-phospho-L-seryl-[protein] + ADP + H(+). The enzyme catalyses L-threonyl-[protein] + ATP = O-phospho-L-threonyl-[protein] + ADP + H(+). In terms of biological role, may play a role in cardiac physiology. The chain is Serine/threonine-protein kinase TNNI3K from Pongo abelii (Sumatran orangutan).